We begin with the raw amino-acid sequence, 201 residues long: Recombination protein RecR (201 aa).

The C4-type zinc finger occupies 57 to 72 (CADCRTFTEQDVCNIC). One can recognise a Toprim domain in the interval 81-176 (GQICVVESPA…EASRIAHGVP (96 aa)).

The protein belongs to the RecR family.

In terms of biological role, may play a role in DNA repair. It seems to be involved in an RecBC-independent recombinational process of DNA repair. It may act with RecF and RecO. This chain is Recombination protein RecR, found in Salmonella agona (strain SL483).